Reading from the N-terminus, the 89-residue chain is Small ribosomal subunit protein uS14A (89 aa).

This sequence belongs to the universal ribosomal protein uS14 family. In terms of assembly, part of the 30S ribosomal subunit. Contacts proteins S3 and S10.

Its function is as follows. Binds 16S rRNA, required for the assembly of 30S particles and may also be responsible for determining the conformation of the 16S rRNA at the A site. This chain is Small ribosomal subunit protein uS14A, found in Lactococcus lactis subsp. lactis (strain IL1403) (Streptococcus lactis).